A 258-amino-acid polypeptide reads, in one-letter code: Protein UL24 homolog (258 aa).

The protein belongs to the herpesviridae UL24 family.

The protein localises to the virion. Its subcellular location is the host cytoplasm. It localises to the host nucleus. It is found in the host nucleolus. The protein resides in the host Golgi apparatus. In terms of biological role, may participate in nuclear egress of viral particles. Plays a role in the dispersal of several host nucleolar proteins including NCL/nucleolin and NPM1. Since deletion of host NCL/nucleolin negatively impact on nuclear egress, UL24 supposedly acts on this process through its effect on host nucleoli. The chain is Protein UL24 homolog from Varicella-zoster virus (strain Dumas) (HHV-3).